We begin with the raw amino-acid sequence, 291 residues long: Pituitary-specific positive transcription factor 1 (291 aa).

The 9aaTAD signature appears at 5–13; the sequence is AFTSADTFI. The 75-residue stretch at 124–198 folds into the POU-specific domain; sequence MDSPEIRELE…ILSKWLEEAE (75 aa). Positions 214–273 form a DNA-binding region, homeobox; it reads KRKRRTTISIAAKDALERHFGEQNKPSSQEIMRMAEELNLEKEVVRVWFCNRRQREKRVK.

Belongs to the POU transcription factor family. Class-1 subfamily. Interacts with PITX1. Interacts with LHX3. Interacts with ELK1.

It is found in the nucleus. Functionally, transcription factor involved in the specification of the lactotrope, somatotrope, and thyrotrope phenotypes in the developing anterior pituitary. Activates growth hormone and prolactin genes. Specifically binds to the consensus sequence 5'-TAAAT-3'. The chain is Pituitary-specific positive transcription factor 1 (POU1F1) from Macaca mulatta (Rhesus macaque).